The chain runs to 270 residues: uncharacterized protein (270 aa).

Disordered stretches follow at residues 1–21 (MSTN…YEKP) and 53–77 (PNIL…AKLN). Positions 58–75 (SKHDGDKNKNDKKKEDAK) are enriched in basic and acidic residues. Positions 182–270 (EENKSREEKH…KIEDNLNTYE (89 aa)) form a coiled coil.

This is an uncharacterized protein from Plasmodium falciparum (isolate 3D7).